A 338-amino-acid chain; its full sequence is Phenylalanine--tRNA ligase alpha subunit (338 aa).

Residue E253 coordinates Mg(2+).

The protein belongs to the class-II aminoacyl-tRNA synthetase family. Phe-tRNA synthetase alpha subunit type 1 subfamily. Tetramer of two alpha and two beta subunits. Requires Mg(2+) as cofactor.

The protein localises to the cytoplasm. The enzyme catalyses tRNA(Phe) + L-phenylalanine + ATP = L-phenylalanyl-tRNA(Phe) + AMP + diphosphate + H(+). This chain is Phenylalanine--tRNA ligase alpha subunit, found in Geotalea uraniireducens (strain Rf4) (Geobacter uraniireducens).